The primary structure comprises 209 residues: Inorganic pyrophosphatase (209 aa).

Positions 38, 52, and 64 each coordinate substrate. Positions 92, 97, and 130 each coordinate Mg(2+). Substrate is bound at residue Tyr-167.

This sequence belongs to the PPase family. In terms of assembly, homohexamer. The cofactor is Mg(2+).

The protein resides in the cytoplasm. The catalysed reaction is diphosphate + H2O = 2 phosphate + H(+). Catalyzes the hydrolysis of inorganic pyrophosphate (PPi) forming two phosphate ions. This Chlamydia trachomatis serovar L2 (strain ATCC VR-902B / DSM 19102 / 434/Bu) protein is Inorganic pyrophosphatase.